The sequence spans 534 residues: Probable DNA polymerase epsilon subunit 2 (534 aa).

This sequence belongs to the DNA polymerase epsilon subunit B family. Consists of four subunits.

It localises to the nucleus. Accessory component of the DNA polymerase epsilon complex. Participates in DNA repair and in chromosomal DNA replication. This is Probable DNA polymerase epsilon subunit 2 (pole-2) from Caenorhabditis elegans.